The sequence spans 295 residues: Bifunctional protein FolD (295 aa).

Residues 166 to 168 (GRS), Ser195, and Ile236 contribute to the NADP(+) site.

Belongs to the tetrahydrofolate dehydrogenase/cyclohydrolase family. As to quaternary structure, homodimer.

It carries out the reaction (6R)-5,10-methylene-5,6,7,8-tetrahydrofolate + NADP(+) = (6R)-5,10-methenyltetrahydrofolate + NADPH. The enzyme catalyses (6R)-5,10-methenyltetrahydrofolate + H2O = (6R)-10-formyltetrahydrofolate + H(+). It functions in the pathway one-carbon metabolism; tetrahydrofolate interconversion. Catalyzes the oxidation of 5,10-methylenetetrahydrofolate to 5,10-methenyltetrahydrofolate and then the hydrolysis of 5,10-methenyltetrahydrofolate to 10-formyltetrahydrofolate. The sequence is that of Bifunctional protein FolD from Chlorobium phaeovibrioides (strain DSM 265 / 1930) (Prosthecochloris vibrioformis (strain DSM 265)).